The sequence spans 181 residues: MELKGTTILAVRGAQGVTIAGDGQVTMGQSIVMKHSARKVRRLYNGRVVAGFAGSTADAFTLFEHFEAKLEEHRGNLVRAAVEMAKSWRKDKYLRRLEAMLLVADNEHILVLSGNGDVIEPDDGIAAIGSGGPYALAAARALARHTQLDAETIAREAMRIAGEICVFTNDHLTVESAETQA.

The active site involves T6. Residues G162, C165, and T168 each coordinate Na(+).

This sequence belongs to the peptidase T1B family. HslV subfamily. In terms of assembly, a double ring-shaped homohexamer of HslV is capped on each side by a ring-shaped HslU homohexamer. The assembly of the HslU/HslV complex is dependent on binding of ATP.

It is found in the cytoplasm. The enzyme catalyses ATP-dependent cleavage of peptide bonds with broad specificity.. Allosterically activated by HslU binding. Functionally, protease subunit of a proteasome-like degradation complex believed to be a general protein degrading machinery. This chain is ATP-dependent protease subunit HslV, found in Nitratidesulfovibrio vulgaris (strain ATCC 29579 / DSM 644 / CCUG 34227 / NCIMB 8303 / VKM B-1760 / Hildenborough) (Desulfovibrio vulgaris).